Consider the following 788-residue polypeptide: LPS-assembly protein LptD (788 aa).

Residues M1–A23 form the signal peptide.

Belongs to the LptD family. Component of the lipopolysaccharide transport and assembly complex. Interacts with LptE and LptA.

The protein localises to the cell outer membrane. Together with LptE, is involved in the assembly of lipopolysaccharide (LPS) at the surface of the outer membrane. The chain is LPS-assembly protein LptD from Photobacterium profundum (strain SS9).